Here is a 159-residue protein sequence, read N- to C-terminus: 3-hydroxyacyl-[acyl-carrier-protein] dehydratase FabZ (159 aa).

The active site involves H58.

This sequence belongs to the thioester dehydratase family. FabZ subfamily.

Its subcellular location is the cytoplasm. It catalyses the reaction a (3R)-hydroxyacyl-[ACP] = a (2E)-enoyl-[ACP] + H2O. Its function is as follows. Involved in unsaturated fatty acids biosynthesis. Catalyzes the dehydration of short chain beta-hydroxyacyl-ACPs and long chain saturated and unsaturated beta-hydroxyacyl-ACPs. This Helicobacter pylori (strain HPAG1) protein is 3-hydroxyacyl-[acyl-carrier-protein] dehydratase FabZ.